The chain runs to 150 residues: Dynein light chain Tctex-type protein 2B (150 aa).

This sequence belongs to the dynein light chain Tctex-type family.

The protein localises to the dynein axonemal particle. Its function is as follows. Acts as one of several non-catalytic accessory components of the cytoplasmic dynein 2 complex (dynein-2 complex), a motor protein complex that drives the movement of cargos along microtubules within cilia and flagella in concert with the intraflagellar transport (IFT) system. Required for proper retrograde ciliary transport. This is Dynein light chain Tctex-type protein 2B (dynlt2b) from Danio rerio (Zebrafish).